A 345-amino-acid chain; its full sequence is MERFYTCSCFFTDNIFLEEYKLHVRFVSENQFRKDYQNILRSLGCESESQFRDVIGKIQAEIERRQNHKLKSTERAAVIKEIYTPLHQHVYHLQESFLAPELLEMVKYCASSEANVQGLLKLIQTEAASRVFRFQVFRKEFCKDLLEELEHFEQSDAPKGRPNTMNNYGIVLNELGFDEGFITPLREVYLRPLTALLYSDCGGNCLDSHKAFVVKYDMHEDLNLSYHYDNSEVTLNVSLGKDFTEGNLFFGDMRQVPLSETECVEVEHRVTEGLLHRGQHMHGALSISSGTRWNLIIWMRASRQRNKLCPMCGKRPTLVESDGFSDGFTMDSDGDARANVSCSLT.

A Fe2OG dioxygenase domain is found at 207-301 (DSHKAFVVKY…RWNLIIWMRA (95 aa)). Positions 227, 229, and 282 each coordinate Fe cation. Position 292 (Arg292) interacts with 2-oxoglutarate.

This sequence belongs to the OGFOD2 family. It depends on Fe(2+) as a cofactor. The cofactor is L-ascorbate.

This chain is 2-oxoglutarate and iron-dependent oxygenase domain-containing protein 2 (ogfod2), found in Danio rerio (Zebrafish).